A 296-amino-acid chain; its full sequence is Magnetosome protein MamB (296 aa).

Topologically, residues 1 to 12 are cytoplasmic; it reads MKFENCRDCREE. The segment at 1–214 is transmembrane domain (TMD); the sequence is MKFENCRDCR…GLMDSSVDTE (214 aa). The helical transmembrane segment at 13–33 threads the bilayer; it reads VVWWAFTADICMTLFKGVLGL. Residues 34–83 lie on the Lumenal side of the membrane; sequence MSGSVALVADSLHSGADVVASGVTQLSLKISNKPADERYPFGYGNIQYIS. The helical transmembrane segment at 84–104 threads the bilayer; the sequence is SSIVGSLLLIGASFLMYGSVM. The Cytoplasmic segment spans residues 105–112; it reads KLISGTYE. Residues 113–133 form a helical membrane-spanning segment; that stretch reads APSIFAAVGASVTVIVNELMY. Over 134–164 the chain is Lumenal; that stretch reads RYQICVGNENNSPAIIANAWDNRSDAISSAA. Residues 165-185 form a helical membrane-spanning segment; that stretch reads VMVGVIASVIGFPIADTIAAI. Residues 186–296 lie on the Cytoplasmic side of the membrane; the sequence is GVSALVGRIG…SPAPAAAARA (111 aa). A C-terminal domain (CTD) region spans residues 215–296; that stretch reads LLQTAWQVAM…SPAPAAAARA (82 aa).

It belongs to the cation diffusion facilitator (CDF) transporter (TC 2.A.4) family. Forms heterodimers with MamM. Probably interacts with MamE.

The protein resides in the magnetosome membrane. In terms of biological role, plays a dual, essential role in magnetosome formation; required for magnetosome vesicle formation as well as biomineralization. Probably binds and transports iron. Requires heterodimerization with MamM for stability. The protein is Magnetosome protein MamB (mamB) of Paramagnetospirillum magneticum (strain ATCC 700264 / AMB-1) (Magnetospirillum magneticum).